Reading from the N-terminus, the 63-residue chain is Sec-independent protein translocase protein TatA (63 aa).

A helical membrane pass occupies residues 1 to 21; it reads MGSFSMWHWLIVLVIVLLLFG. Residues 42–63 are disordered; it reads GMTDEDAPDTAKTVDHKADETK. The span at 53–63 shows a compositional bias: basic and acidic residues; the sequence is KTVDHKADETK.

This sequence belongs to the TatA/E family. The Tat system comprises two distinct complexes: a TatABC complex, containing multiple copies of TatA, TatB and TatC subunits, and a separate TatA complex, containing only TatA subunits. Substrates initially bind to the TatABC complex, which probably triggers association of the separate TatA complex to form the active translocon.

Its subcellular location is the cell inner membrane. Functionally, part of the twin-arginine translocation (Tat) system that transports large folded proteins containing a characteristic twin-arginine motif in their signal peptide across membranes. TatA could form the protein-conducting channel of the Tat system. This Rhizobium leguminosarum bv. trifolii (strain WSM2304) protein is Sec-independent protein translocase protein TatA.